Consider the following 146-residue polypeptide: Probable trivalent organoarsenical cleaving enzyme (146 aa).

In terms of domain architecture, VOC spans 2-118 (KYVHVGVNVV…DGNEWEFFYT (117 aa)). Fe(2+) is bound by residues histidine 5 and histidine 62. Residues cysteine 95 and cysteine 96 each contribute to the roxarsone (III) site. A Fe(2+)-binding site is contributed by glutamate 114.

It to M.tuberculosis Rv2641. The cofactor is Fe(2+).

It catalyses the reaction methylarsonous acid + AH2 + O2 = arsenite + methanol + A + H(+). The enzyme catalyses roxarsone (III) + AH2 + O2 = 4-hydroxy-3-nitrocyclohexa-2,5-dien-1-one + arsenite + A + H(+). It carries out the reaction nitarsone (III) + AH2 + O2 = 4-nitrocyclohexa-2,5-dien-1-one + arsenite + A + H(+). The catalysed reaction is 4-aminophenylarsonous acid + AH2 + O2 = 4-aminocyclohexa-2,5-dien-1-one + arsenite + A. Its function is as follows. Nonheme iron-dependent dioxygenase that can break carbon-arsenic bonds, playing a role in the detoxification of environmental organoarsenical compounds. Catalyzes the oxygen-dependent demethylation of highly toxic methylarsonous acid (MAs(III)) to arsenite, which can then be exported out of the cell. Can also cleave the C-As bond in several trivalent aromatic arsenicals, including roxarsone (III), nitarsone (III) and (4-aminophenyl)arsonous acid. Organoarsenical degradation by this enzyme is proposed to have a significant impact on the arsenic biogeocycle that maintains a balance between organic and inorganic species. The chain is Probable trivalent organoarsenical cleaving enzyme (yqcK) from Bacillus subtilis (strain 168).